The sequence spans 170 residues: Aspartate 1-decarboxylase (170 aa).

Residue Ser-25 is the Schiff-base intermediate with substrate; via pyruvic acid of the active site. Position 25 is a pyruvic acid (Ser) (Ser-25). Residue Thr-57 participates in substrate binding. The active-site Proton donor is the Tyr-58. Residue 73 to 75 (GAA) participates in substrate binding. The segment at 118–170 (GHDPAEALPDDPSSLRGDLAVPGNPVTAAARRGTPTHQAPVALPASRTVVAPR) is disordered.

Belongs to the PanD family. In terms of assembly, heterooctamer of four alpha and four beta subunits. Requires pyruvate as cofactor. In terms of processing, is synthesized initially as an inactive proenzyme, which is activated by self-cleavage at a specific serine bond to produce a beta-subunit with a hydroxyl group at its C-terminus and an alpha-subunit with a pyruvoyl group at its N-terminus.

It is found in the cytoplasm. The catalysed reaction is L-aspartate + H(+) = beta-alanine + CO2. It functions in the pathway cofactor biosynthesis; (R)-pantothenate biosynthesis; beta-alanine from L-aspartate: step 1/1. Catalyzes the pyruvoyl-dependent decarboxylation of aspartate to produce beta-alanine. The chain is Aspartate 1-decarboxylase from Frankia alni (strain DSM 45986 / CECT 9034 / ACN14a).